The following is a 43-amino-acid chain: Protein PsbN (43 aa).

The chain crosses the membrane as a helical span at residues 5–25 (TVLSIFISSLLLGITIYSIYI).

The protein belongs to the PsbN family.

The protein localises to the plastid. It localises to the chloroplast thylakoid membrane. May play a role in photosystem I and II biogenesis. In Gracilaria tenuistipitata var. liui (Red alga), this protein is Protein PsbN.